A 300-amino-acid chain; its full sequence is Porphobilinogen deaminase (300 aa).

At cysteine 239 the chain carries S-(dipyrrolylmethanemethyl)cysteine.

It belongs to the HMBS family. As to quaternary structure, monomer. Dipyrromethane is required as a cofactor.

It carries out the reaction 4 porphobilinogen + H2O = hydroxymethylbilane + 4 NH4(+). Its pathway is porphyrin-containing compound metabolism; protoporphyrin-IX biosynthesis; coproporphyrinogen-III from 5-aminolevulinate: step 2/4. Functionally, tetrapolymerization of the monopyrrole PBG into the hydroxymethylbilane pre-uroporphyrinogen in several discrete steps. The chain is Porphobilinogen deaminase from Francisella tularensis subsp. tularensis (strain FSC 198).